The chain runs to 228 residues: Ribose-5-phosphate isomerase A (228 aa).

Residues 29–32 (TGST), 85–88 (DGAD), and 98–101 (KGGG) each bind substrate. The active-site Proton acceptor is glutamate 107. Lysine 125 contacts substrate.

Belongs to the ribose 5-phosphate isomerase family. In terms of assembly, homodimer.

The enzyme catalyses aldehydo-D-ribose 5-phosphate = D-ribulose 5-phosphate. It functions in the pathway carbohydrate degradation; pentose phosphate pathway; D-ribose 5-phosphate from D-ribulose 5-phosphate (non-oxidative stage): step 1/1. Catalyzes the reversible conversion of ribose-5-phosphate to ribulose 5-phosphate. This Staphylococcus aureus (strain MRSA252) protein is Ribose-5-phosphate isomerase A.